The sequence spans 36 residues: Amanexitide proprotein 1 (36 aa).

The propeptide occupies 1–10 (MSDINTARLP). The cyclopeptide (Val-Pro) cross-link spans 11 to 19 (VFSLPVFFP). The propeptide occupies 20–36 (FVSDDIQAVLTRGESLC).

This sequence belongs to the MSDIN fungal toxin family. Post-translationally, processed by the macrocyclase-peptidase enzyme POPB to yield a toxic cyclic nonapeptide. POPB first removes 10 residues from the N-terminus. Conformational trapping of the remaining peptide forces the enzyme to release this intermediate rather than proceed to macrocyclization. The enzyme rebinds the remaining peptide in a different conformation and catalyzes macrocyclization of the N-terminal 9 residues. As to expression, expressed in basidiocarps.

Its function is as follows. Cyclic nonapeptide that belongs to the MSDIN-like toxin family responsible for a large number of food poisoning cases and deaths. This Amanita exitialis (Guangzhou destroying angel) protein is Amanexitide proprotein 1.